The following is a 240-amino-acid chain: MNQNSEGCMKKISSVNLDKLINDFSQIEKKMIESSGKNNILDMQLEKANCLLRVMQTKEVAMKQGENEQLKRNADLMKEKFKMHEQEHRNNIAKLMSEMKIKEEGHKIEKTKLYQDMQKKVKLSEEKNKELIEKKELEISELNAKLRTQEREKQNEMIKLQLEFDAKLARVQIKTKSYPDSTVSPHSIYKRKLQHLQEEKDKEIAVLRNTVRDLEQRLSVSKDSQVKLVGKDPRFKRRRF.

A coiled-coil region spans residues 55 to 223 (MQTKEVAMKQ…LEQRLSVSKD (169 aa)).

The chain is Coiled-coil domain-containing protein 152 (CCDC152) from Bos taurus (Bovine).